The chain runs to 133 residues: FPRL1 inhibitory protein (133 aa).

Residues 1–28 form the signal peptide; the sequence is MKKNITKTIIASTVIAAGLLTQTNDAKA.

This sequence belongs to the CHIPS/FLIPr family.

Its subcellular location is the secreted. Functionally, may be involved in countering the first line of host defense mechanisms. Impairs the leukocyte response to FPRL1 agonists by binding directly to host FPRL1. The protein is FPRL1 inhibitory protein (flr) of Staphylococcus aureus (strain Mu50 / ATCC 700699).